A 449-amino-acid polypeptide reads, in one-letter code: 5'-deoxyadenosine deaminase (449 aa).

Residues His79 and His81 each contribute to the Zn(2+) site. Substrate is bound by residues Glu108 and His200. Residue His227 coordinates Zn(2+). 2 residues coordinate substrate: Glu230 and Asp316. Asp316 contributes to the Zn(2+) binding site.

It belongs to the metallo-dependent hydrolases superfamily. MTA/SAH deaminase family. In terms of assembly, homotetramer. Zn(2+) serves as cofactor.

The enzyme catalyses 5'-deoxyadenosine + H2O + H(+) = 5'-deoxyinosine + NH4(+). It carries out the reaction S-adenosyl-L-homocysteine + H2O + H(+) = S-inosyl-L-homocysteine + NH4(+). It catalyses the reaction S-methyl-5'-thioadenosine + H2O + H(+) = S-methyl-5'-thioinosine + NH4(+). The catalysed reaction is adenosine + H2O + H(+) = inosine + NH4(+). Its pathway is amino-acid biosynthesis; S-adenosyl-L-methionine biosynthesis. Catalyzes the deamination of three SAM-derived enzymatic products, namely 5'-deoxyadenosine, S-adenosyl-L-homocysteine, and 5'-methylthioadenosine, to produce the inosine analogs. Can also deaminate adenosine. The preferred substrate for this enzyme is 5'-deoxyadenosine, but all these substrates are efficiently deaminated. Likely functions in a S-adenosyl-L-methionine (SAM) recycling pathway from S-adenosyl-L-homocysteine (SAH) produced from SAM-dependent methylation reactions. May also be involved in the recycling of 5'-deoxyadenosine, whereupon the 5'-deoxyribose moiety of 5'-deoxyinosine is further metabolized to deoxyhexoses used for the biosynthesis of aromatic amino acids in methanogens. The chain is 5'-deoxyadenosine deaminase from Methanospirillum hungatei JF-1 (strain ATCC 27890 / DSM 864 / NBRC 100397 / JF-1).